We begin with the raw amino-acid sequence, 340 residues long: Phosphoribosylformylglycinamidine cyclo-ligase (340 aa).

Belongs to the AIR synthase family.

It is found in the cytoplasm. It catalyses the reaction 2-formamido-N(1)-(5-O-phospho-beta-D-ribosyl)acetamidine + ATP = 5-amino-1-(5-phospho-beta-D-ribosyl)imidazole + ADP + phosphate + H(+). It participates in purine metabolism; IMP biosynthesis via de novo pathway; 5-amino-1-(5-phospho-D-ribosyl)imidazole from N(2)-formyl-N(1)-(5-phospho-D-ribosyl)glycinamide: step 2/2. In Streptococcus pyogenes serotype M6 (strain ATCC BAA-946 / MGAS10394), this protein is Phosphoribosylformylglycinamidine cyclo-ligase.